Reading from the N-terminus, the 133-residue chain is MAYRKMLKSKIHRACVTQADLDYEGSITISPELLKAANILPYEAVNVWNITAGTRFETYAITGEKGSTDICVNGAAAHLVTPGDLVIIASFTQILEEDCAAHEPTVVFVDQFNRLKEIRPERIGVKNKIPCSA.

The Schiff-base intermediate with substrate; via pyruvic acid role is filled by S26. Residue S26 is modified to Pyruvic acid (Ser). Residue T58 coordinates substrate. The active-site Proton donor is the Y59. Substrate is bound at residue 74 to 76 (GAA).

It belongs to the PanD family. In terms of assembly, heterooctamer of four alpha and four beta subunits. Requires pyruvate as cofactor. In terms of processing, is synthesized initially as an inactive proenzyme, which is activated by self-cleavage at a specific serine bond to produce a beta-subunit with a hydroxyl group at its C-terminus and an alpha-subunit with a pyruvoyl group at its N-terminus.

The protein localises to the cytoplasm. The enzyme catalyses L-aspartate + H(+) = beta-alanine + CO2. Its pathway is cofactor biosynthesis; (R)-pantothenate biosynthesis; beta-alanine from L-aspartate: step 1/1. In terms of biological role, catalyzes the pyruvoyl-dependent decarboxylation of aspartate to produce beta-alanine. The chain is Aspartate 1-decarboxylase from Legionella pneumophila (strain Lens).